A 389-amino-acid chain; its full sequence is MCERAARLCRAGAHRLLREPPPQGRALGGLLRWVGARMGEPRAPLVPDIPSADPGPGPAASRGGTAVILDIFRRADKNDDGKLSLEEFQLFFADGVLNEKELEGLFHTIDSDNTNHVDTKELCDYFVEHMGDYEDVLASLETLNHSVLKAMGYTKKVYEGGSNVDQFVTRFLLKETANQIQSLLSSVESAVEAIEEQTSQIRQDHCKPSHAVNESRYGGPTPPYIPNHKLVAPEPMKSLPVATGEPKEDGLEGQISRLAELIGRLESKTLSFDLQQRLSDEEGTNMHLQLVRQEMAVCPEQLSEFLDSLRQYLRSTAEERNCFHVAAVRMADGLTFVIYEFWETEEEWKRHLQSPVCKAFRHVKVDTLSQPEALSQISVPAAWCTSGRD.

At Arg-10 the chain carries Omega-N-methylarginine. An Asymmetric dimethylarginine modification is found at Arg-42. EF-hand domains are found at residues 63 to 98 (GGTAVILDIFRRADKNDDGKLSLEEFQLFFADGVLN) and 99 to 132 (EKELEGLFHTIDSDNTNHVDTKELCDYFVEHMGD). Asp-76, Asn-78, Asp-80, Lys-82, Glu-87, Asp-110, Asp-112, Thr-114, His-116, and Glu-121 together coordinate Ca(2+). A coiled-coil region spans residues 173–198 (LKETANQIQSLLSSVESAVEAIEEQT). In terms of domain architecture, ABM spans 289–377 (QLVRQEMAVC…LSQPEALSQI (89 aa)).

Interacts (calcium-dependent) with ADORA2A and GRM5. Expressed in the iris, in the ciliary margin of the retina and in the inner portion of the neural retina. Expressed in the spinal dorsal horn with especially strong expression in lamina IIi; found in excitory synaptic boutons (at protein level).

The protein localises to the cytoplasm. Its subcellular location is the cell projection. It localises to the dendrite. The protein resides in the axon. It is found in the cell membrane. In terms of biological role, may act as a signaling scaffold protein that senses intracellular calcium. Can modulate ligand-induced internalization of ADORA2A and coupling efficiency of mGluR5/GRM5; for both receptors may regulate signaling activity such as promoting MAPK1/3 (ERK1/2) activation. The sequence is that of N-terminal EF-hand calcium-binding protein 2 (Necab2) from Mus musculus (Mouse).